The primary structure comprises 60 residues: Cytotoxin 8 (60 aa).

4 disulfides stabilise this stretch: Cys3–Cys21, Cys14–Cys38, Cys42–Cys53, and Cys54–Cys59.

This sequence belongs to the three-finger toxin family. Short-chain subfamily. Type IA cytotoxin sub-subfamily. As to quaternary structure, monomer in solution; Homodimer and oligomer in the presence of negatively charged lipids forming a pore with a size ranging between 20 and 30 Angstroms. Expressed by the venom gland.

The protein localises to the secreted. The protein resides in the target cell membrane. In terms of biological role, shows cytolytic activity on many different cells by forming pore in lipid membranes. In vivo, increases heart rate or kills the animal by cardiac arrest. In addition, it binds to heparin with high affinity, interacts with Kv channel-interacting protein 1 (KCNIP1) in a calcium-independent manner, and binds to integrin alpha-V/beta-3 (ITGAV/ITGB3) with moderate affinity. The chain is Cytotoxin 8 from Naja annulifera (Banded Egyptian cobra).